The chain runs to 381 residues: Erythronate-4-phosphate dehydrogenase (381 aa).

Ser45 and Thr67 together coordinate substrate. Residues Asp148, 207–209 (ASR), and Asp233 each bind NAD(+). Arg209 is a catalytic residue. The active site involves Glu238. His255 serves as the catalytic Proton donor. Gly258 provides a ligand contact to NAD(+).

It belongs to the D-isomer specific 2-hydroxyacid dehydrogenase family. PdxB subfamily. Homodimer.

The protein localises to the cytoplasm. It carries out the reaction 4-phospho-D-erythronate + NAD(+) = (R)-3-hydroxy-2-oxo-4-phosphooxybutanoate + NADH + H(+). It participates in cofactor biosynthesis; pyridoxine 5'-phosphate biosynthesis; pyridoxine 5'-phosphate from D-erythrose 4-phosphate: step 2/5. Catalyzes the oxidation of erythronate-4-phosphate to 3-hydroxy-2-oxo-4-phosphonooxybutanoate. The sequence is that of Erythronate-4-phosphate dehydrogenase from Idiomarina loihiensis (strain ATCC BAA-735 / DSM 15497 / L2-TR).